We begin with the raw amino-acid sequence, 520 residues long: Succinyl-CoA:3-ketoacid coenzyme A transferase 2A, mitochondrial (520 aa).

Residues 1–39 constitute a mitochondrion transit peptide; that stretch reads MAALRLLAWALPRGVSALRPPPALPHRLIRRYVSDRSGS. The tract at residues 280-299 is disordered; it reads ERLTTRDSKPAPGSKDNDPS. Glu-342 serves as the catalytic 5-glutamyl coenzyme A thioester intermediate.

This sequence belongs to the 3-oxoacid CoA-transferase family. Homodimer.

The protein resides in the mitochondrion. The catalysed reaction is a 3-oxo acid + succinyl-CoA = a 3-oxoacyl-CoA + succinate. It functions in the pathway ketone metabolism; succinyl-CoA degradation; acetoacetyl-CoA from succinyl-CoA: step 1/1. In terms of biological role, key enzyme for ketone body catabolism. Transfers the CoA moiety from succinate to acetoacetate. Formation of the enzyme-CoA intermediate proceeds via an unstable anhydride species formed between the carboxylate groups of the enzyme and substrate. Probably play and important roles in the energy metabolism of spermatozoa. The sequence is that of Succinyl-CoA:3-ketoacid coenzyme A transferase 2A, mitochondrial (Oxct2a) from Mus musculus (Mouse).